The sequence spans 62 residues: Photosystem II reaction center protein Z (62 aa).

Helical transmembrane passes span 8–28 and 41–61; these read AVFA…VALA and FSGV…NSFI.

This sequence belongs to the PsbZ family. As to quaternary structure, PSII is composed of 1 copy each of membrane proteins PsbA, PsbB, PsbC, PsbD, PsbE, PsbF, PsbH, PsbI, PsbJ, PsbK, PsbL, PsbM, PsbT, PsbY, PsbZ, Psb30/Ycf12, at least 3 peripheral proteins of the oxygen-evolving complex and a large number of cofactors. It forms dimeric complexes.

It localises to the plastid. The protein localises to the chloroplast thylakoid membrane. Functionally, may control the interaction of photosystem II (PSII) cores with the light-harvesting antenna, regulates electron flow through the 2 photosystem reaction centers. PSII is a light-driven water plastoquinone oxidoreductase, using light energy to abstract electrons from H(2)O, generating a proton gradient subsequently used for ATP formation. In Pinus thunbergii (Japanese black pine), this protein is Photosystem II reaction center protein Z.